The sequence spans 348 residues: LRP2-binding protein (348 aa).

Residues 60–93 form a TPR repeat; the sequence is TLAYFLRGQLYFEEGWYEEALEQFEEIEEKDHQA. Sel1-like repeat units follow at residues 94-126, 134-169, 174-207, 208-243, 244-278, and 298-333; these read TYQL…DSPC, FAAA…DNGN, VKAQ…GNGN, LESQ…ERGN, VYAQ…EVHD, and AMAS…RLNP.

In terms of assembly, interacts with LRP2.

It localises to the cytoplasm. Its function is as follows. May act as an adapter that regulates LRP2 function. This is LRP2-binding protein (LRP2BP) from Macaca fascicularis (Crab-eating macaque).